The sequence spans 42 residues: uncharacterized protein (42 aa).

This is an uncharacterized protein from Saccharomyces cerevisiae (strain ATCC 204508 / S288c) (Baker's yeast).